The following is an 87-amino-acid chain: Small ribosomal subunit protein uS15 (87 aa).

It belongs to the universal ribosomal protein uS15 family. In terms of assembly, part of the 30S ribosomal subunit. Forms a bridge to the 50S subunit in the 70S ribosome, contacting the 23S rRNA.

Functionally, one of the primary rRNA binding proteins, it binds directly to 16S rRNA where it helps nucleate assembly of the platform of the 30S subunit by binding and bridging several RNA helices of the 16S rRNA. In terms of biological role, forms an intersubunit bridge (bridge B4) with the 23S rRNA of the 50S subunit in the ribosome. The protein is Small ribosomal subunit protein uS15 of Cutibacterium acnes (strain DSM 16379 / KPA171202) (Propionibacterium acnes).